The chain runs to 331 residues: Olfactory receptor 6B3 (331 aa).

The Extracellular portion of the chain corresponds to 1–25; it reads MSGENVTRVGTFILVGFPTAPGLQY. Asn5 is a glycosylation site (N-linked (GlcNAc...) asparagine). A helical membrane pass occupies residues 26–46; that stretch reads LLFLLFLLTYLFVLVENLAII. The Cytoplasmic segment spans residues 47–54; that stretch reads LTVWSSTS. The helical transmembrane segment at 55-75 threads the bilayer; that stretch reads LHRPMYYFLSSMSFLEIWYVS. The Extracellular portion of the chain corresponds to 76–99; sequence DITPKMLEGFLLQQKRISFVGCMT. A disulfide bridge connects residues Cys97 and Cys189. Residues 100–120 traverse the membrane as a helical segment; the sequence is QLYFFSSLVCTECVLLASMAY. Residues 121-139 lie on the Cytoplasmic side of the membrane; sequence DRYVAICHPLRYHVLVTPG. The helical transmembrane segment at 140-160 threads the bilayer; sequence LCLQLVGFSFVSGFTISMIKV. The Extracellular portion of the chain corresponds to 161 to 196; it reads CFISSVTFCGSNVLNHFFCDISPILKLACTDFSTAE. A helical membrane pass occupies residues 197-217; the sequence is LVDFILAFIILVFPLLATMLS. Over 218-237 the chain is Cytoplasmic; the sequence is YAHITLAVLRIPSATGCWRA. Residues 238 to 258 form a helical membrane-spanning segment; that stretch reads FFTCASHLTVVTVFYTALLFM. Residues 259 to 271 are Extracellular-facing; it reads YVRPQAIDSRSSN. The chain crosses the membrane as a helical span at residues 272–292; the sequence is KLISVLYTVITPILNPLIYCL. Topologically, residues 293 to 331 are cytoplasmic; that stretch reads RNKEFKNALKKAFGLTSCAVEGRLSSLLELHLQIHSQPL.

This sequence belongs to the G-protein coupled receptor 1 family.

It localises to the cell membrane. Its function is as follows. Odorant receptor. The sequence is that of Olfactory receptor 6B3 (OR6B3) from Homo sapiens (Human).